A 245-amino-acid chain; its full sequence is Triosephosphate isomerase (245 aa).

4–6 contributes to the substrate binding site; it reads NWK. Residue His91 is the Electrophile of the active site. Glu161 acts as the Proton acceptor in catalysis. Substrate-binding positions include Gly167, Ser207, and 228–229; that span reads GG.

Belongs to the triosephosphate isomerase family. Homodimer.

The protein localises to the cytoplasm. It carries out the reaction D-glyceraldehyde 3-phosphate = dihydroxyacetone phosphate. Its pathway is carbohydrate biosynthesis; gluconeogenesis. It participates in carbohydrate degradation; glycolysis; D-glyceraldehyde 3-phosphate from glycerone phosphate: step 1/1. Involved in the gluconeogenesis. Catalyzes stereospecifically the conversion of dihydroxyacetone phosphate (DHAP) to D-glyceraldehyde-3-phosphate (G3P). In Chlorobaculum tepidum (strain ATCC 49652 / DSM 12025 / NBRC 103806 / TLS) (Chlorobium tepidum), this protein is Triosephosphate isomerase.